The primary structure comprises 510 residues: Fumarate hydratase, mitochondrial (510 aa).

The N-terminal 44 residues, Met1–Met44, are a transit peptide targeting the mitochondrion. 3 positions are modified to N6-acetyllysine; alternate: Lys61, Lys66, and Lys80. An N6-succinyllysine; alternate mark is found at Lys61, Lys66, and Lys80. Residues Thr85 and Thr90 each carry the phosphothreonine modification. Lys94 bears the N6-acetyllysine mark. N6-acetyllysine; alternate occurs at positions 115 and 122. 2 positions are modified to N6-succinyllysine; alternate: Lys115 and Lys122. Residues Ser145–Thr147, His176–Asp179, and Ser186–Asn188 each bind substrate. The residue at position 213 (Lys213) is an N6-acetyllysine. Lys223 is subject to N6-acetyllysine; alternate. N6-succinyllysine; alternate is present on Lys223. Thr234 is a substrate binding site. His235 (proton donor/acceptor) is an active-site residue. Thr236 bears the Phosphothreonine; by PRKDC mark. The residue at position 256 (Lys256) is an N6-acetyllysine. N6-acetyllysine; alternate is present on Lys292. Lys292 is modified (N6-succinyllysine; alternate). Ser365 is an active-site residue. Substrate contacts are provided by residues Ser366 and Lys371–Asn373. Ser366 is modified (phosphoserine). N6-succinyllysine is present on residues Lys467 and Lys473. Lys502 carries the post-translational modification N6-acetyllysine.

The protein belongs to the class-II fumarase/aspartase family. Fumarase subfamily. Homotetramer. Interacts with H2AZ1. In terms of processing, phosphorylation at Thr-236 by PRKDC in response to DNA damage promotes translocation to the nucleus and recruitment to DNA double-strand breaks (DSBs). Expressed in red blood cells; underexpressed in red blood cells (cytoplasm) of patients with hereditary non-spherocytic hemolytic anemia of unknown etiology.

Its subcellular location is the mitochondrion. The protein resides in the cytoplasm. The protein localises to the cytosol. It localises to the nucleus. It is found in the chromosome. The catalysed reaction is (S)-malate = fumarate + H2O. The protein operates within carbohydrate metabolism; tricarboxylic acid cycle; (S)-malate from fumarate: step 1/1. In terms of biological role, catalyzes the reversible stereospecific interconversion of fumarate to L-malate. Experiments in other species have demonstrated that specific isoforms of this protein act in defined pathways and favor one direction over the other. Functionally, catalyzes the hydration of fumarate to L-malate in the tricarboxylic acid (TCA) cycle to facilitate a transition step in the production of energy in the form of NADH. Its function is as follows. Catalyzes the dehydration of L-malate to fumarate. Fumarate metabolism in the cytosol plays a role during urea cycle and arginine metabolism; fumarate being a by-product of the urea cycle and amino-acid catabolism. Also plays a role in DNA repair by promoting non-homologous end-joining (NHEJ). In response to DNA damage and phosphorylation by PRKDC, translocates to the nucleus and accumulates at DNA double-strand breaks (DSBs): acts by catalyzing formation of fumarate, an inhibitor of KDM2B histone demethylase activity, resulting in enhanced dimethylation of histone H3 'Lys-36' (H3K36me2). This is Fumarate hydratase, mitochondrial from Homo sapiens (Human).